The primary structure comprises 813 residues: Serine/threonine-protein kinase kin-29 (813 aa).

A Protein kinase domain is found at 18-269 (YDVGRAIGKG…IQNVLAHRWM (252 aa)). Residues 24–32 (IGKGNFATV) and K47 contribute to the ATP site. The Proton acceptor role is filled by D140. A disordered region spans residues 383–412 (LSSPDCDSDDSSNSDLCDESPLSSLEPNHK). Acidic residues predominate over residues 388 to 400 (CDSDDSSNSDLCD).

It belongs to the protein kinase superfamily. CAMK Ser/Thr protein kinase family. SNF1 subfamily. In terms of assembly, interacts with tax-6. Mg(2+) is required as a cofactor. In terms of processing, autophosphorylated. Elevated cAMP levels appears to act via PKA to directly or indirectly phosphorylate multiple sites on kin-29 and inhibit function.

It is found in the cytoplasm. The protein localises to the nucleus. The catalysed reaction is L-seryl-[protein] + ATP = O-phospho-L-seryl-[protein] + ADP + H(+). The enzyme catalyses L-threonyl-[protein] + ATP = O-phospho-L-threonyl-[protein] + ADP + H(+). Regulates chemoreceptor expression by phosphorylating the hda-4 class II histone deacetylase (HDAC) and inhibiting the gene repression functions of hda-4 and the mef-2 transcription factor, enabling the correct sensing and transduction of food signals. Role in determining body size, the dauer decision and serotonin-mediated egg laying. May modulate the Sma/Mab pathway and regulates development in the later larval stages. In Caenorhabditis briggsae, this protein is Serine/threonine-protein kinase kin-29.